Reading from the N-terminus, the 37-residue chain is Large ribosomal subunit protein bL36 (37 aa).

Belongs to the bacterial ribosomal protein bL36 family.

The chain is Large ribosomal subunit protein bL36 from Acetivibrio thermocellus (strain ATCC 27405 / DSM 1237 / JCM 9322 / NBRC 103400 / NCIMB 10682 / NRRL B-4536 / VPI 7372) (Clostridium thermocellum).